Here is a 1668-residue protein sequence, read N- to C-terminus: DNA polymerase (1668 aa).

2 consecutive DOD-type homing endonuclease domains span residues 739 to 872 and 1191 to 1330; these read LLGY…SLGV and LIGL…LVGV.

This sequence belongs to the DNA polymerase type-B family. Post-translationally, this protein undergoes a protein self splicing that involves a post-translational excision of the intervening region (intein) followed by peptide ligation.

The enzyme catalyses DNA(n) + a 2'-deoxyribonucleoside 5'-triphosphate = DNA(n+1) + diphosphate. In terms of biological role, in addition to polymerase activity, this DNA polymerase exhibits 3' to 5' exonuclease activity. Functionally, PI-ThyI and PI-ThyII are endonucleases. PI-ThyI cleaves the inteinless sequence of the Thy DNA pol gene. It requires a 21-bp minimal recognition sequence. The sequence is that of DNA polymerase (pol) from Thermococcus hydrothermalis.